A 378-amino-acid polypeptide reads, in one-letter code: T-cell immunoglobulin and mucin domain-containing protein 4 (378 aa).

The signal sequence occupies residues 1-24; that stretch reads MSKEPLILWLMIEFWWLYLTPVTS. An Ig-like V-type domain is found at 25–126; that stretch reads ETVVTEVLGH…PGWFNDVKIN (102 aa). Topologically, residues 25–314 are extracellular; the sequence is ETVVTEVLGH…SMKNEMPISQ (290 aa). 3 disulfide bridges follow: cysteine 40/cysteine 112, cysteine 53/cysteine 64, and cysteine 59/cysteine 111. 2 disordered regions span residues 136–160 and 269–304; these read TTTH…TRQM and WKTS…GIPM. Over residues 269–297 the composition is skewed to polar residues; that stretch reads WKTSDSVSSPQPGASDTAVPEQNKTTKTG. N-linked (GlcNAc...) asparagine glycosylation occurs at asparagine 291. The helical transmembrane segment at 315–335 threads the bilayer; that stretch reads LLMIIAPSLGFVLFALFVAFL. Topologically, residues 336–378 are cytoplasmic; sequence LRGKLMETYCSQKHTRLDYIGDSKNVLNDVQHGREDEDGLFTL. Serine 358 carries the phosphoserine modification.

This sequence belongs to the immunoglobulin superfamily. TIM family. Interacts with MERTK; this interaction enhances TIMD4-mediated efferocytosis. Interacts with EPHA2.

The protein localises to the cell membrane. The protein resides in the secreted. It localises to the extracellular exosome. Phosphatidylserine receptor that plays different role in immune response including phagocytosis of apoptotic cells and T-cell regulation. Controls T-cell activation in a bimodal fashion, decreasing the activation of naive T-cells by inducing cell cycle arrest, while increasing proliferation of activated T-cells by activating AKT1 and ERK1/2 phosphorylations and subsequent signaling pathways. Also plays a role in efferocytosis which is the process by which apoptotic cells are removed by phagocytic cells. Mechanistically, promotes the engulfment of apoptotic cells or exogenous particles by securing them to phagocytes through direct binding to phosphatidylserine present on apoptotic cells, while other engulfment receptors such as MERTK efficiently recognize apoptotic cells and mediate their ingestion. Additionally, promotes autophagy process by suppressing NLRP3 inflammasome activity via activation of LKB1/PRKAA1 pathway in a phosphatidylserine-dependent mechanism. In terms of biological role, (Microbial infection) Plays a positive role in exosome-mediated trafficking of HIV-1 virus and its entry into immune cells. The sequence is that of T-cell immunoglobulin and mucin domain-containing protein 4 (TIMD4) from Homo sapiens (Human).